The following is a 118-amino-acid chain: V-type proton ATPase subunit G 2 (118 aa).

The segment at 26–90 (RKRKARRLKQ…VQGMQSSQQR (65 aa)) is disordered. The span at 35-55 (QAKEEAQMEVEQYRREREQEF) shows a compositional bias: basic and acidic residues. Polar residues-rich tracts occupy residues 56–69 (QSKQ…QGNL) and 78–89 (RRQVQGMQSSQQ).

This sequence belongs to the V-ATPase G subunit family. In terms of assembly, V-ATPase is a heteromultimeric enzyme made up of two complexes: the ATP-hydrolytic V1 complex and the proton translocation V0 complex. The V1 complex consists of three catalytic AB heterodimers that form a heterohexamer, three peripheral stalks each consisting of EG heterodimers, one central rotor including subunits D and F, and the regulatory subunits C and H. The proton translocation complex V0 consists of the proton transport subunit a, a ring of proteolipid subunits c9c'', rotary subunit d, subunits e and f, and the accessory subunits ATP6AP1/Ac45 and ATP6AP2/PRR.

Its subcellular location is the melanosome. The protein resides in the cytoplasmic vesicle. The protein localises to the clathrin-coated vesicle membrane. Subunit of the V1 complex of vacuolar(H+)-ATPase (V-ATPase), a multisubunit enzyme composed of a peripheral complex (V1) that hydrolyzes ATP and a membrane integral complex (V0) that translocates protons. V-ATPase is responsible for acidifying and maintaining the pH of intracellular compartments and in some cell types, is targeted to the plasma membrane, where it is responsible for acidifying the extracellular environment. This is V-type proton ATPase subunit G 2 (ATP6V1G2) from Sus scrofa (Pig).